The primary structure comprises 345 residues: Opioid-binding protein/cell adhesion molecule (345 aa).

The first 27 residues, 1 to 27, serve as a signal peptide directing secretion; sequence MGVCGYLFLPWKCLVVVSLRLLFLVPT. Ig-like C2-type domains lie at 39 to 126, 136 to 219, and 223 to 310; these read PKAM…PKTS, PQIM…VKIT, and PPYI…ASIT. N44, N70, and N140 each carry an N-linked (GlcNAc...) asparagine glycan. C57 and C115 are joined by a disulfide. Intrachain disulfides connect C157–C202 and C244–C296. N285, N293, and N306 each carry an N-linked (GlcNAc...) asparagine glycan. N322 is lipidated: GPI-anchor amidated asparagine. Residues 323 to 345 constitute a propeptide, removed in mature form; sequence SASRALACLWLSGTLLAHFFIKF.

Belongs to the immunoglobulin superfamily. IgLON family.

The protein localises to the cell membrane. Binds opioids in the presence of acidic lipids; probably involved in cell contact. The chain is Opioid-binding protein/cell adhesion molecule (OPCML) from Homo sapiens (Human).